The following is a 464-amino-acid chain: L-cystine uptake protein TcyP (464 aa).

A run of 10 helical transmembrane segments spans residues 3 to 23, 34 to 54, 73 to 93, 107 to 127, 184 to 204, 225 to 245, 263 to 283, 347 to 367, 371 to 391, and 395 to 415; these read TLLVGINVAVMLILVGVLYYM, VFTALGIGIIFGLILQFIYEP, YVKLLQMIVMPLILVSIISAF, GLIIGILILTTGIAAAVGIAA, PTSTISVVIFAAFIGIAFIGV, IVMRMVTLILRLTPYGVLALM, FVLASYVALIVMFVIHLLLIA, AGIYPAMLAMMVAPTVGIDPL, FILTLIAVVAISSFGVAGVGG, and FAALIVLSTMNLPIGIVALVI.

The protein belongs to the dicarboxylate/amino acid:cation symporter (DAACS) (TC 2.A.23) family.

Its subcellular location is the membrane. Mediates uptake of L-cystine, the oxidized form of L-cysteine. This chain is L-cystine uptake protein TcyP, found in Bacillus thuringiensis (strain Al Hakam).